The following is a 159-amino-acid chain: NADH-quinone oxidoreductase subunit I (159 aa).

4Fe-4S ferredoxin-type domains lie at 51 to 80 (RRYE…IEAD) and 90 to 119 (TRYD…EGPN). [4Fe-4S] cluster contacts are provided by Cys60, Cys63, Cys66, Cys70, Cys99, Cys102, Cys105, and Cys109.

Belongs to the complex I 23 kDa subunit family. In terms of assembly, NDH-1 is composed of 14 different subunits. Subunits NuoA, H, J, K, L, M, N constitute the membrane sector of the complex. Requires [4Fe-4S] cluster as cofactor.

The protein localises to the cell inner membrane. The enzyme catalyses a quinone + NADH + 5 H(+)(in) = a quinol + NAD(+) + 4 H(+)(out). In terms of biological role, NDH-1 shuttles electrons from NADH, via FMN and iron-sulfur (Fe-S) centers, to quinones in the respiratory chain. The immediate electron acceptor for the enzyme in this species is believed to be ubiquinone. Couples the redox reaction to proton translocation (for every two electrons transferred, four hydrogen ions are translocated across the cytoplasmic membrane), and thus conserves the redox energy in a proton gradient. The protein is NADH-quinone oxidoreductase subunit I of Rickettsia peacockii (strain Rustic).